Here is a 344-residue protein sequence, read N- to C-terminus: uncharacterized protein (344 aa).

This is an uncharacterized protein from Aquifex aeolicus (strain VF5).